The sequence spans 750 residues: Cullin-5 (750 aa).

The Cullin neddylation domain occupies 678 to 739; it reads RFFKLQAAIV…QEYIRRTTDD (62 aa). Lys691 is covalently cross-linked (Glycyl lysine isopeptide (Lys-Gly) (interchain with G-Cter in NEDD8)).

The protein belongs to the cullin family. Neddylated; which enhances the ubiquitination activity of SCF-like complex.

It participates in protein modification; protein ubiquitination. Its function is as follows. Probable core component of cullin-based SCF-like E3 ubiquitin-protein ligase complexes which mediate the ubiquitination and subsequent proteasomal degradation of target proteins. The E3 ubiquitin-protein ligase activity of the complex is dependent on the neddylation of the cullin subunit. The chain is Cullin-5 (culE) from Dictyostelium discoideum (Social amoeba).